A 46-amino-acid chain; its full sequence is Small polypeptide DEVIL 5 (46 aa).

Residues 8–24 (VGGTKRKMWSRGVGGVV) form a helical membrane-spanning segment. The tract at residues 15–46 (MWSRGVGGVVREQKAKLYIIRRCVVMLLCWHD) is required for DVL/RTFL small polypeptide activity.

It belongs to the DVL/RTFL small polypeptides family. Mostly expressed in roots and flowers, and, to a lower extent, in leaves and stems.

It is found in the cell membrane. Small polypeptide acting as a regulatory molecule which coordinates cellular responses required for differentiation, growth and development, including leaves shape, pedicule elongation, inflorescence organization and fruit maturation, probably by restricting polar cell proliferation in lateral organs and coordinating socket cell recruitment and differentiation at trichome sites. This is Small polypeptide DEVIL 5 from Arabidopsis thaliana (Mouse-ear cress).